Here is a 229-residue protein sequence, read N- to C-terminus: Germin-like protein 12-2 (229 aa).

The N-terminal stretch at 1–22 is a signal peptide; sequence MASSNFFLLTALIALVATQAMA. Cysteines 32 and 47 form a disulfide. Positions 62-217 constitute a Cupin type-1 domain; it reads ANLDKPMDTT…AFQVDKKAVD (156 aa). An N-linked (GlcNAc...) asparagine glycan is attached at N78. 4 residues coordinate Mn(2+): H111, H113, E118, and H162.

This sequence belongs to the germin family. As to quaternary structure, oligomer (believed to be a pentamer but probably hexamer).

Its subcellular location is the secreted. The protein localises to the extracellular space. It is found in the apoplast. In terms of biological role, may play a role in plant defense. Probably has no oxalate oxidase activity even if the active site is conserved. The polypeptide is Germin-like protein 12-2 (Oryza sativa subsp. japonica (Rice)).